The sequence spans 228 residues: NAD(P)H-hydrate epimerase (228 aa).

Positions 9 to 209 (VRAVERLAHR…LLGLTPAFLA (201 aa)) constitute a YjeF N-terminal domain. Residue 53–57 (NNGGD) coordinates (6S)-NADPHX. K(+)-binding residues include N54 and D115. Residues 119–125 (GIGLARP) and D148 contribute to the (6S)-NADPHX site. K(+) is bound at residue S151.

This sequence belongs to the NnrE/AIBP family. K(+) serves as cofactor.

It catalyses the reaction (6R)-NADHX = (6S)-NADHX. The catalysed reaction is (6R)-NADPHX = (6S)-NADPHX. Catalyzes the epimerization of the S- and R-forms of NAD(P)HX, a damaged form of NAD(P)H that is a result of enzymatic or heat-dependent hydration. This is a prerequisite for the S-specific NAD(P)H-hydrate dehydratase to allow the repair of both epimers of NAD(P)HX. The protein is NAD(P)H-hydrate epimerase of Bordetella bronchiseptica (strain ATCC BAA-588 / NCTC 13252 / RB50) (Alcaligenes bronchisepticus).